The following is a 272-amino-acid chain: 2-C-methyl-D-erythritol 4-phosphate cytidylyltransferase (272 aa).

It belongs to the IspD/TarI cytidylyltransferase family. IspD subfamily.

It catalyses the reaction 2-C-methyl-D-erythritol 4-phosphate + CTP + H(+) = 4-CDP-2-C-methyl-D-erythritol + diphosphate. It functions in the pathway isoprenoid biosynthesis; isopentenyl diphosphate biosynthesis via DXP pathway; isopentenyl diphosphate from 1-deoxy-D-xylulose 5-phosphate: step 2/6. In terms of biological role, catalyzes the formation of 4-diphosphocytidyl-2-C-methyl-D-erythritol from CTP and 2-C-methyl-D-erythritol 4-phosphate (MEP). The sequence is that of 2-C-methyl-D-erythritol 4-phosphate cytidylyltransferase from Xanthomonas oryzae pv. oryzae (strain MAFF 311018).